The primary structure comprises 29 residues: Histone H2B (29 aa).

The interval 1-29 (MPEPAKSAPKKGSTRTAAKGGKKRRKSRK) is disordered. 2 positions are modified to N6-acetyllysine: K6 and K11. Position 13 is a phosphoserine (S13). Residues 20–29 (GGKKRRKSRK) show a composition bias toward basic residues.

This sequence belongs to the histone H2B family. As to quaternary structure, the nucleosome is a histone octamer containing two molecules each of H2A, H2B, H3 and H4 assembled in one H3-H4 heterotetramer and two H2A-H2B heterodimers. The octamer wraps approximately 147 bp of DNA. Monoubiquitination at the C-terminal Lys gives a specific tag for epigenetic transcriptional activation and is also prerequisite for histone H3 'Lys-4' and 'Lys-79' methylation. Post-translationally, phosphorylated during apoptosis; which facilitates apoptotic chromatin condensation.

The protein localises to the nucleus. The protein resides in the chromosome. Functionally, core component of nucleosome. Nucleosomes wrap and compact DNA into chromatin, limiting DNA accessibility to the cellular machineries which require DNA as a template. Histones thereby play a central role in transcription regulation, DNA repair, DNA replication and chromosomal stability. DNA accessibility is regulated via a complex set of post-translational modifications of histones, also called histone code, and nucleosome remodeling. The protein is Histone H2B of Cyprinus carpio (Common carp).